A 523-amino-acid chain; its full sequence is MELTMASTMSLALLVLSAAYVLVALRRSRSSSSKPRRLPPSPPGWPVIGHLHLMSGMPHHALAELARTMRAPLFRMRLGSVPAVVISKPDLARAALTTNDAALASRPHLLSGQFLSFGCSDVTFAPAGPYHRMARRVVVSELLSARRVATYGAVRVKELRRLLAHLTKNTSPAKPVDLSECFLNLANDVLCRVAFGRRFPHGEGDKLGAVLAEAQDLFAGFTIGDFFPELEPVASTVTGLRRRLKKCLADLREACDVIVDEHISGNRQRIPGDRDEDFVDVLLRVQKSPDLEVPLTDDNLKALVLDMFVAGTDTTFATLEWVMTELVRHPRILKKAQEEVRRVVGDSGRVEESHLGELHYMRAIIKETFRLHPAVPLLVPRESVAPCTLGGYDIPARTRVFINTFAMGRDPEIWDNPLEYSPERFESAGGGGEIDLKDPDYKLLPFGGGRRGCPGYTFALATVQVSLASLLYHFEWALPAGVRAEDVNLDETFGLATRKKEPLFVAVRKSDAYEFKGEELSEV.

A helical transmembrane segment spans residues 5-25 (MASTMSLALLVLSAAYVLVAL). Cysteine 453 is a binding site for heme.

It belongs to the cytochrome P450 family. Heme is required as a cofactor.

The protein localises to the endoplasmic reticulum membrane. The enzyme catalyses tryptamine + reduced [NADPH--hemoprotein reductase] + O2 = serotonin + oxidized [NADPH--hemoprotein reductase] + H2O + H(+). In terms of biological role, involved in serotonin biosynthesis. Catalyzes the conversion of tryptamine to serotonin. Accumulation of serotonin may play a role in innate immunity. The polypeptide is Tryptamine 5-hydroxylase (Oryza sativa subsp. japonica (Rice)).